Consider the following 1363-residue polypeptide: DNA-directed RNA polymerase subunit beta (1363 aa).

The protein belongs to the RNA polymerase beta chain family. As to quaternary structure, the RNAP catalytic core consists of 2 alpha, 1 beta, 1 beta' and 1 omega subunit. When a sigma factor is associated with the core the holoenzyme is formed, which can initiate transcription.

It catalyses the reaction RNA(n) + a ribonucleoside 5'-triphosphate = RNA(n+1) + diphosphate. Functionally, DNA-dependent RNA polymerase catalyzes the transcription of DNA into RNA using the four ribonucleoside triphosphates as substrates. This chain is DNA-directed RNA polymerase subunit beta, found in Syntrophus aciditrophicus (strain SB).